A 407-amino-acid chain; its full sequence is MKRAFIMVLDSFGIGATEDAERFGDVGADTLGHIAEACAKGEADNGRKGPLNLPNLTRLGLAKAHEGSTGFIPAGMDGNAEVIGAYAWAHEMSSGKDTPSGHWEIAGVPVLFEWGYFSDHENSFPQELLDKLVERANLPGYLGNCHSSGTVILDQLGEEHMKTGKPIFYTSADSVFQIACHEETFGLDKLYELCEIAREELTNGGYNIGRVIARPFIGDKAGNFQRTGNRHDLAVEPPAPTVLQKLVDEKHGQVVSVGKIADIYANCGITKKVKATGLDALFDATIKEMKEAGDNTIVFTNFVDFDSSWGHRRDVAGYAAGLELFDRRLPELMSLLRDDDILILTADHGCDPTWTGTDHTREHIPVLVYGPKVKPGSLGHRETFADIGQTLAKYFGTSDMEYGKAMF.

Mn(2+)-binding residues include D10, D306, H311, D347, H348, and H359.

Belongs to the phosphopentomutase family. The cofactor is Mn(2+).

The protein localises to the cytoplasm. It carries out the reaction 2-deoxy-alpha-D-ribose 1-phosphate = 2-deoxy-D-ribose 5-phosphate. It catalyses the reaction alpha-D-ribose 1-phosphate = D-ribose 5-phosphate. The protein operates within carbohydrate degradation; 2-deoxy-D-ribose 1-phosphate degradation; D-glyceraldehyde 3-phosphate and acetaldehyde from 2-deoxy-alpha-D-ribose 1-phosphate: step 1/2. Its function is as follows. Isomerase that catalyzes the conversion of deoxy-ribose 1-phosphate (dRib-1-P) and ribose 1-phosphate (Rib-1-P) to deoxy-ribose 5-phosphate (dRib-5-P) and ribose 5-phosphate (Rib-5-P), respectively. This chain is Phosphopentomutase, found in Shigella boydii serotype 18 (strain CDC 3083-94 / BS512).